The primary structure comprises 306 residues: Recombination-associated protein RdgC (306 aa).

Belongs to the RdgC family.

The protein resides in the cytoplasm. The protein localises to the nucleoid. In terms of biological role, may be involved in recombination. The protein is Recombination-associated protein RdgC of Pseudomonas syringae pv. tomato (strain ATCC BAA-871 / DC3000).